The primary structure comprises 292 residues: Poly(U)-specific endoribonuclease-B (292 aa).

The region spanning 8–285 (VNHELSKLFN…IGTAYPALLS (278 aa)) is the EndoU domain. Catalysis depends on residues His-162, His-178, and Lys-224.

This sequence belongs to the ENDOU family. Monomer. Mn(2+) is required as a cofactor.

It localises to the nucleus. The enzyme catalyses uridylyl-uridylyl-ribonucleotide-RNA = a 3'-end uridylyl-2',3'-cyclophospho-uridine-RNA + a 5'-end dephospho-ribonucleoside-RNA. Functionally, poly(U)-specific endoribonuclease involved in the processing of intron-encoded box C/D snoRNAs, such as U16 and U86. Releases products that have 2',3'-cyclic phosphate termini at the 3'-end. The protein is Poly(U)-specific endoribonuclease-B (endou-b) of Xenopus laevis (African clawed frog).